We begin with the raw amino-acid sequence, 476 residues long: Methylenetetrahydrofolate--tRNA-(uracil-5-)-methyltransferase TrmFO (476 aa).

14–19 (GGGLAG) contacts FAD. The segment at 428–447 (LTEPPTHGADGKKLRGPEKS) is disordered. Positions 436–447 (ADGKKLRGPEKS) are enriched in basic and acidic residues.

Belongs to the MnmG family. TrmFO subfamily. The cofactor is FAD.

It is found in the cytoplasm. The enzyme catalyses uridine(54) in tRNA + (6R)-5,10-methylene-5,6,7,8-tetrahydrofolate + NADH + H(+) = 5-methyluridine(54) in tRNA + (6S)-5,6,7,8-tetrahydrofolate + NAD(+). The catalysed reaction is uridine(54) in tRNA + (6R)-5,10-methylene-5,6,7,8-tetrahydrofolate + NADPH + H(+) = 5-methyluridine(54) in tRNA + (6S)-5,6,7,8-tetrahydrofolate + NADP(+). Its function is as follows. Catalyzes the folate-dependent formation of 5-methyl-uridine at position 54 (M-5-U54) in all tRNAs. The sequence is that of Methylenetetrahydrofolate--tRNA-(uracil-5-)-methyltransferase TrmFO from Rhodopseudomonas palustris (strain BisA53).